We begin with the raw amino-acid sequence, 466 residues long: Carboxy-terminal processing protease CtpA (466 aa).

The N-terminal stretch at 1-36 (MKRQLKLFFIVLITAVVASALTLFITGNSSILGQKS) is a signal peptide. A PDZ domain is found at 96 to 174 (DETISASFEG…TKVKLELNRA (79 aa)). Active-site charge relay system residues include S297, E308, and K322.

The protein belongs to the peptidase S41A family.

It catalyses the reaction The enzyme shows specific recognition of a C-terminal tripeptide, Xaa-Yaa-Zaa, in which Xaa is preferably Ala or Leu, Yaa is preferably Ala or Tyr, and Zaa is preferably Ala, but then cleaves at a variable distance from the C-terminus. A typical cleavage is -Ala-Ala-|-Arg-Ala-Ala-Lys-Glu-Asn-Tyr-Ala-Leu-Ala-Ala.. This is Carboxy-terminal processing protease CtpA (ctpA) from Bacillus subtilis (strain 168).